We begin with the raw amino-acid sequence, 431 residues long: MVERYSLSPMKDLWTEEAKYRRWLEVELAVTRAYEELGMIPKGVTERIRNNAKIDVELFKKIEEKTNHDVVAFVEGIGSMIGEDSRFFHYGLTSSDVLDTANSLALVEAGKILLESLKEFCDVLWEVANRYKHTPTIGRTHGVHAEPTSFGLKVLGWYSEMKRNVQRLERAIEEVSYGKISGAVGNYANVPPEVEEKALSYLGLKPEPVSTQVVPRDRHAFYLSTLAIVAAGIERIAVEIRHLQRTEVLEVEEPFRKGQRGSSAMPHKKNPITCERLTGLSRMMRAYVDPSLENIALWHERDISHSSVERYVFPDATQTLYYMIVTATNVVRNMKVNEERMKKNIDLTKGLVFSQRVLLKLIEKGLTRKEAYDIVQRNALKTWNSEKHFLEYLLEDEEVKKLVTKEELEELFDISYYLKHVDHIFERFEKE.

N(6)-(1,2-dicarboxyethyl)-AMP-binding positions include 4–5, 67–69, and 93–94; these read RY, NHD, and TS. The active-site Proton donor/acceptor is His141. Gln212 serves as a coordination point for N(6)-(1,2-dicarboxyethyl)-AMP. Ser262 functions as the Proton donor/acceptor in the catalytic mechanism. N(6)-(1,2-dicarboxyethyl)-AMP is bound by residues Ser263, 268 to 270, and 307 to 311; these read KKN and SVERY.

This sequence belongs to the lyase 1 family. Adenylosuccinate lyase subfamily. Homotetramer. Residues from neighboring subunits contribute catalytic and substrate-binding residues to each active site.

The enzyme catalyses N(6)-(1,2-dicarboxyethyl)-AMP = fumarate + AMP. It catalyses the reaction (2S)-2-[5-amino-1-(5-phospho-beta-D-ribosyl)imidazole-4-carboxamido]succinate = 5-amino-1-(5-phospho-beta-D-ribosyl)imidazole-4-carboxamide + fumarate. It participates in purine metabolism; AMP biosynthesis via de novo pathway; AMP from IMP: step 2/2. It functions in the pathway purine metabolism; IMP biosynthesis via de novo pathway; 5-amino-1-(5-phospho-D-ribosyl)imidazole-4-carboxamide from 5-amino-1-(5-phospho-D-ribosyl)imidazole-4-carboxylate: step 2/2. Functionally, catalyzes two reactions in de novo purine nucleotide biosynthesis. Catalyzes the breakdown of 5-aminoimidazole- (N-succinylocarboxamide) ribotide (SAICAR or 2-[5-amino-1-(5-phospho-beta-D-ribosyl)imidazole-4-carboxamido]succinate) to 5-aminoimidazole-4-carboxamide ribotide (AICAR or 5-amino-1-(5-phospho-beta-D-ribosyl)imidazole-4-carboxamide) and fumarate, and of adenylosuccinate (ADS or N(6)-(1,2-dicarboxyethyl)-AMP) to adenosine monophosphate (AMP) and fumarate. The sequence is that of Adenylosuccinate lyase (purB) from Thermotoga maritima (strain ATCC 43589 / DSM 3109 / JCM 10099 / NBRC 100826 / MSB8).